A 69-amino-acid chain; its full sequence is Pleurain-A4 (69 aa).

Residues 1–22 form the signal peptide; it reads MFTLKKTLLLLFFLGTISISLC. Positions 23–43 are excised as a propeptide; that stretch reads KQERDADEDDGRKMTEEEVKR. Cysteine 63 and cysteine 69 are oxidised to a cystine.

It belongs to the frog skin active peptide (FSAP) family. Pleurain subfamily. In terms of tissue distribution, expressed by the skin glands.

The protein resides in the secreted. Functionally, antimicrobial peptide. Has activity against Gram-positive and -negative bacteria, and fungi. Has little hemolytic activity on red blood cells. This is Pleurain-A4 from Nidirana pleuraden (Yunnan pond frog).